The sequence spans 767 residues: MPRQFPKLNISEVDEQVRLLAEKVFAKVLREEDSKDALSLFTVPEDCPIGQKEAKERELQKELAEQKSVETAKRKKSFKMIRSQSLSLQMPPQQDWKGPPAASPAMSPTTPVVTGATSLPTPAPYAMPEFQRVTISGDYCAGITLEDYEQAAKSLAKALMIREKYARLAYHRFPRITSQYLGHPRADTAPPEEGLPDFHPPPLPQEDPYCLDDAPPNLDYLVHMQGGILFVYDNKKMLEHQEPHSLPYPDLETYTVDMSHILALITDGPTKTYCHRRLNFLESKFSLHEMLNEMSEFKELKSNPHRDFYNVRKVDTHIHAAACMNQKHLLRFIKHTYQTEPDRTVAEKRGRKITLRQVFDGLHMDPYDLTVDSLDVHAGRQTFHRFDKFNSKYNPVGASELRDLYLKTENYLGGEYFARMVKEVARELEESKYQYSEPRLSIYGRSPEEWPNLAYWFIQHKVYSPNMRWIIQVPRIYDIFRSKKLLPNFGKMLENIFLPLFKATINPQDHRELHLFLKYVTGFDSVDDESKHSDHMFSDKSPNPDVWTSEQNPPYSYYLYYMYANIMVLNNLRRERGLSTFLFRPHCGEAGSITHLVSAFLTADNISHGLLLKKSPVLQYLYYLAQIPIAMSPLSNNSLFLEYSKNPLREFLHKGLHVSLSTDDPMQFHYTKEALMEEYAIAAQVWKLSTCDLCEIARNSVLQSGLSHQEKQKFLGQNYYKEGPEGNDIRKTNVAQIRMAFRYETLCNELSFLSDAMKSEEITALTN.

Ser-85 and Ser-107 each carry phosphoserine. 2 disordered regions span residues 89 to 111 and 181 to 205; these read QMPPQQDWKGPPAASPAMSPTTP and LGHPRADTAPPEEGLPDFHPPPLPQ. 2 residues coordinate Zn(2+): His-317 and His-319. Substrate-binding positions include His-319 and 388–393; that span reads KFNSKY. Position 586 (His-586) interacts with Zn(2+). Residue Glu-589 participates in substrate binding. The Proton acceptor role is filled by His-608. Residue Asp-663 coordinates Zn(2+). Residue 664–667 participates in substrate binding; the sequence is DPMQ.

Belongs to the metallo-dependent hydrolases superfamily. Adenosine and AMP deaminases family. Homotetramer. The cofactor is Zn(2+).

The enzyme catalyses AMP + H2O + H(+) = IMP + NH4(+). It participates in purine metabolism; IMP biosynthesis via salvage pathway; IMP from AMP: step 1/1. Functionally, AMP deaminase plays a critical role in energy metabolism. The protein is AMP deaminase 3 of Homo sapiens (Human).